The following is a 566-amino-acid chain: MALNVIATLTLISVCVHADRICVGYLSTNSSERVDTLLENGVPVTSSIDLIETNHTGTYCSLNGVSPVHLGDCSFEGWIVGNPACTSNFGIREWSYLIEDPAAPHGLCYPGELNNNGELRHLFSGIRSFSRTELIPPTSWGEVLDGTTSACRDNTGTNSFYRNLVWFIKKNNRYPVISKTYNNTTGRDVLVLWGIHHPVSVDETKTLYVNSDPYTLVSTKSWSEKYKLETGVRPGYNGQRSWMKIYWSLIHPGEMITFESNGGFLAPRYGYIIEEYGKGRIFQSRIRMSRCNTKCQTSVGGINTNRTFQNIDKNALGDCPKYIKSGQLKLATGLRNVPAISNRGLFGAIAGFIEGGWPGLINGWYGFQHQNEQGTGIAADKESTQKAIDQITTKINNIIDKMNGNYDSIRGEFNQVEKRINMLADRIDDAVTDIWSYNAKLLVLLENDKTLDMHDANVKNLHEQVRRELKDNAIDEGNGCFELLHKCNDSCMETIRNGTYDHTEYAEESKLKRQEIDGIKLKSEDNVYKALSIYSCIASSVVLVGLILSFIMWACSSGNCRFNVCI.

Residues 1 to 18 (MALNVIATLTLISVCVHA) form the signal peptide. Topologically, residues 19–532 (DRICVGYLST…SEDNVYKALS (514 aa)) are extracellular. Disulfide bonds link C22-C480, C60-C291, C73-C85, C108-C151, C295-C319, and C487-C491. N-linked (GlcNAc...) asparagine; by host glycosylation is found at N29 and N54. 5 N-linked (GlcNAc...) asparagine; by host glycosylation sites follow: N182, N183, N305, N488, and N497. The helical transmembrane segment at 533–553 (IYSCIASSVVLVGLILSFIMW) threads the bilayer. Residues 554–566 (ACSSGNCRFNVCI) are Cytoplasmic-facing. 2 S-palmitoyl cysteine; by host lipidation sites follow: C555 and C565.

Belongs to the influenza viruses hemagglutinin family. Homotrimer of disulfide-linked HA1-HA2. In terms of processing, palmitoylated. Post-translationally, in natural infection, inactive HA is matured into HA1 and HA2 outside the cell by one or more trypsin-like, arginine-specific endoprotease secreted by the bronchial epithelial cells. One identified protease that may be involved in this process is secreted in lungs by club cells.

It localises to the virion membrane. Its subcellular location is the host apical cell membrane. Its function is as follows. Binds to sialic acid-containing receptors on the cell surface, bringing about the attachment of the virus particle to the cell. This attachment induces virion internalization of about two third of the virus particles through clathrin-dependent endocytosis and about one third through a clathrin- and caveolin-independent pathway. Plays a major role in the determination of host range restriction and virulence. Class I viral fusion protein. Responsible for penetration of the virus into the cell cytoplasm by mediating the fusion of the membrane of the endocytosed virus particle with the endosomal membrane. Low pH in endosomes induces an irreversible conformational change in HA2, releasing the fusion hydrophobic peptide. Several trimers are required to form a competent fusion pore. In terms of biological role, binds to sialic acid-containing receptors on the cell surface, bringing about the attachment of the virus particle to the cell. This attachment induces virion internalization either through clathrin-dependent endocytosis or through clathrin- and caveolin-independent pathway. Plays a major role in the determination of host range restriction and virulence. Class I viral fusion protein. Responsible for penetration of the virus into the cell cytoplasm by mediating the fusion of the membrane of the endocytosed virus particle with the endosomal membrane. Low pH in endosomes induces an irreversible conformational change in HA2, releasing the fusion hydrophobic peptide. Several trimers are required to form a competent fusion pore. The sequence is that of Hemagglutinin from Influenza A virus (strain A/Gull/Maryland/704/1977 H13N6).